We begin with the raw amino-acid sequence, 527 residues long: Phospholipase A1-Igamma3, chloroplastic (527 aa).

Residues 1-52 constitute a chloroplast transit peptide; that stretch reads MASLSLPITLKNPRFFSSSPQNIFKTQPQTLVLTTKFKTCSIICSSSCTSIS. Positions 55 to 65 are enriched in low complexity; the sequence is TTQQKQSNKQT. The disordered stretch occupies residues 55 to 82; that stretch reads TTQQKQSNKQTHVSDNKREEKAEEEEEE. Basic and acidic residues predominate over residues 66 to 75; it reads HVSDNKREEK. Positions 300–304 match the GXSXG motif; it reads GHSLG. Catalysis depends on Ser-302, which acts as the Acyl-ester intermediate. Active-site charge relay system residues include Asp-366 and His-423.

This sequence belongs to the AB hydrolase superfamily. Lipase family. As to expression, highly expressed in flowers. Lower levels in seedlings, leaves and stems.

It is found in the plastid. Its subcellular location is the chloroplast. The catalysed reaction is 1,2-dihexadecanoyl-sn-glycero-3-phosphocholine + H2O = 2-hexadecanoyl-sn-glycero-3-phosphocholine + hexadecanoate + H(+). The enzyme catalyses a 1,2-diacyl-3-O-(beta-D-galactosyl)-sn-glycerol + H2O = an acyl-3-O-(beta-D-galactosyl)-sn-glycerol + a fatty acid + H(+). It catalyses the reaction a 1,2-diacyl-3-O-[alpha-D-galactosyl-(1-&gt;6)-beta-D-galactosyl]-sn-glycerol + H2O = acyl-3-O-[alpha-D-galactosyl-(1-&gt;6)-beta-D-galactosyl]-sn-glycerol + a fatty acid + H(+). Its function is as follows. Acylhydrolase that catalyzes the hydrolysis of phosphatidylcholine at the sn-1 position. Moderate activity toward phosphatidylcholine (PC), monogalactosyldiacylglycerol (MGDG), digalactosyldiacylglycerol (DGDG) and triacylglycerol (TAG). In Arabidopsis thaliana (Mouse-ear cress), this protein is Phospholipase A1-Igamma3, chloroplastic.